We begin with the raw amino-acid sequence, 116 residues long: Large ribosomal subunit protein uL14m (116 aa).

Belongs to the universal ribosomal protein uL14 family.

Its subcellular location is the mitochondrion. This chain is Large ribosomal subunit protein uL14m (RPL14), found in Acanthamoeba polyphaga (Amoeba).